The chain runs to 59 residues: Small ribosomal subunit protein eS30 (59 aa).

Positions Lys1 to Arg35 are disordered. The segment covering Glu23–Arg35 has biased composition (basic residues). The residue at position 51 (Lys51) is an N6-succinyllysine.

It belongs to the eukaryotic ribosomal protein eS30 family.

The polypeptide is Small ribosomal subunit protein eS30 (Fau) (Mus spicilegus (Steppe mouse)).